Here is a 377-residue protein sequence, read N- to C-terminus: MAVNVNTNVAAMTAQRYLTGATNAQQTSMERLSSGFKINSAKDDAAGLQISNRLNVQSRGLDVAVRNANDGISIAQTAEGAMNETTNILQRMRDLSLQSANGSNSKSERVAIQEEITALNDELNRIAETTSFGGNKLLNGTFSTKSFQIGADNGEAVMLTLKDMRSDNRMMGGTSYVAAEGKDKDWKVQAGANDITFTLKDIDGNDQTITVNAKEGDDIEEVATYINGQTDMVKASVNEKGQLQIFAGNNKVTGDVAFSGGLAGALNMQAGTAETVDTIDVTSVGGAQQSVAVIDSALKYVDSHRAELGAFQNRFNHAISNLDNINENVNASKSRIKDTDFAKETTALTKSQILSQASSSVLAQAKQAPNAALSLLG.

2 coiled-coil regions span residues 103–129 (SNSKSERVAIQEEITALNDELNRIAET) and 310–339 (AFQNRFNHAISNLDNINENVNASKSRIKDT).

This sequence belongs to the bacterial flagellin family. In terms of assembly, heteromer of multiple flagellin subunits including FlaA, FlaB, FlaC, FlaD and FlaE.

The protein resides in the secreted. Its subcellular location is the bacterial flagellum. Flagellin is the subunit protein which polymerizes to form the filaments of bacterial flagella. FlaD is not essential for flagellar synthesis and motility. This Vibrio cholerae serotype O1 (strain ATCC 39315 / El Tor Inaba N16961) protein is Flagellin D (flaD).